We begin with the raw amino-acid sequence, 75 residues long: MVVIRLARFGRKKRPFYRIVVTDSRKRRDSGWIESIGYYNPLTDPVTVKIDEERLNYWLGVGAKMSERVKKLSGK.

The protein belongs to the bacterial ribosomal protein bS16 family.

In Nitratiruptor sp. (strain SB155-2), this protein is Small ribosomal subunit protein bS16.